The primary structure comprises 369 residues: Muscleblind-like protein 1 (369 aa).

4 C3H1-type zinc fingers span residues 13–41 (WLTL…HPSK), 47–73 (NGRV…HPPP), 178–206 (TDRL…HPAD), and 214–240 (DNTV…HPPA).

This sequence belongs to the muscleblind family.

The protein localises to the nucleus. The protein resides in the cytoplasm. It localises to the cytoplasmic granule. Involved in pre-mRNA alternative splicing regulation. Binds to CUG triplet repeat in RNA. This chain is Muscleblind-like protein 1 (MBNL1), found in Gallus gallus (Chicken).